A 100-amino-acid polypeptide reads, in one-letter code: Integration host factor subunit alpha (100 aa).

The tract at residues 53-72 is disordered; it reads FDLRDKRQRPGRNPKTGEEI.

Belongs to the bacterial histone-like protein family. As to quaternary structure, heterodimer of an alpha and a beta chain.

Functionally, this protein is one of the two subunits of integration host factor, a specific DNA-binding protein that functions in genetic recombination as well as in transcriptional and translational control. This is Integration host factor subunit alpha from Stutzerimonas stutzeri (strain A1501) (Pseudomonas stutzeri).